The sequence spans 315 residues: Homoserine O-succinyltransferase (315 aa).

Cys-142 (acyl-thioester intermediate) is an active-site residue. Residues Lys-163 and Ser-192 each coordinate substrate. His-235 (proton acceptor) is an active-site residue. Glu-237 is a catalytic residue. Arg-249 contacts substrate.

It belongs to the MetA family.

The protein resides in the cytoplasm. The catalysed reaction is L-homoserine + succinyl-CoA = O-succinyl-L-homoserine + CoA. The protein operates within amino-acid biosynthesis; L-methionine biosynthesis via de novo pathway; O-succinyl-L-homoserine from L-homoserine: step 1/1. In terms of biological role, transfers a succinyl group from succinyl-CoA to L-homoserine, forming succinyl-L-homoserine. The polypeptide is Homoserine O-succinyltransferase (Shewanella piezotolerans (strain WP3 / JCM 13877)).